The chain runs to 240 residues: Orotidine 5'-phosphate decarboxylase (240 aa).

Substrate contacts are provided by residues aspartate 15, lysine 37, 64–73 (DLKYHDIPNT), threonine 127, arginine 188, glutamine 197, glycine 217, and arginine 218. The active-site Proton donor is lysine 66.

Belongs to the OMP decarboxylase family. Type 1 subfamily. In terms of assembly, homodimer.

The catalysed reaction is orotidine 5'-phosphate + H(+) = UMP + CO2. It participates in pyrimidine metabolism; UMP biosynthesis via de novo pathway; UMP from orotate: step 2/2. Functionally, catalyzes the decarboxylation of orotidine 5'-monophosphate (OMP) to uridine 5'-monophosphate (UMP). This is Orotidine 5'-phosphate decarboxylase from Citrifermentans bemidjiense (strain ATCC BAA-1014 / DSM 16622 / JCM 12645 / Bem) (Geobacter bemidjiensis).